The sequence spans 210 residues: Protein GET1 (210 aa).

The Lumenal portion of the chain corresponds to 1 to 4; sequence MPSL. A helical transmembrane segment spans residues 5 to 24; that stretch reads LIIVLIIHVVTYLINTIGAN. The Cytoplasmic portion of the chain corresponds to 25–110; that stretch reads TIDSLLWLLY…SFDLAVKSVR (86 aa). Residues 39 to 95 are a coiled coil; it reads NQTSQTADEQRRLKREVMQLKREMNATSSQDEFAKWAKLRRRHDKTMEEYEAKNKAL. A helical transmembrane segment spans residues 111–131; the sequence is FFSTTGLKLFLQFWFSKTPIF. Residues 132-155 lie on the Lumenal side of the membrane; it reads ELPRGWIPWQVEWVLSFPRAPLGT. The helical transmembrane segment at 156–172 threads the bilayer; it reads VSIQIWGGVCATVVSLA. The Cytoplasmic portion of the chain corresponds to 173 to 210; that stretch reads GDAIGVVNVYLTSKAPKQKEPATSGENSARPMAIKKEL. A disordered region spans residues 189–210; sequence KQKEPATSGENSARPMAIKKEL.

This sequence belongs to the WRB/GET1 family. Interacts with GET3.

Its subcellular location is the endoplasmic reticulum membrane. Its function is as follows. Required for the post-translational delivery of tail-anchored (TA) proteins to the endoplasmic reticulum. Acts as a membrane receptor for soluble GET3, which recognizes and selectively binds the transmembrane domain of TA proteins in the cytosol. This is Protein GET1 from Coccidioides posadasii (strain C735) (Valley fever fungus).